Reading from the N-terminus, the 492-residue chain is N-succinylglutamate 5-semialdehyde dehydrogenase (492 aa).

220 to 225 lines the NAD(+) pocket; it reads GSANTG. Residues Glu243 and Cys277 contribute to the active site.

The protein belongs to the aldehyde dehydrogenase family. AstD subfamily.

It carries out the reaction N-succinyl-L-glutamate 5-semialdehyde + NAD(+) + H2O = N-succinyl-L-glutamate + NADH + 2 H(+). It functions in the pathway amino-acid degradation; L-arginine degradation via AST pathway; L-glutamate and succinate from L-arginine: step 4/5. Catalyzes the NAD-dependent reduction of succinylglutamate semialdehyde into succinylglutamate. The sequence is that of N-succinylglutamate 5-semialdehyde dehydrogenase from Escherichia coli (strain K12 / MC4100 / BW2952).